Here is a 327-residue protein sequence, read N- to C-terminus: Ribonucleoside-diphosphate reductase small chain (327 aa).

Residues Asp70, Glu101, and His104 each coordinate Fe cation. Tyr108 is a catalytic residue. Fe cation is bound by residues Glu164, Glu198, and His201.

This sequence belongs to the ribonucleoside diphosphate reductase small chain family. As to quaternary structure, heterotetramer composed of a homodimer of the large subunit (R1) and a homodimer of the small subunit (R2). Larger multisubunit protein complex are also active, composed of (R1)n(R2)n. Fe cation is required as a cofactor.

It catalyses the reaction a 2'-deoxyribonucleoside 5'-diphosphate + [thioredoxin]-disulfide + H2O = a ribonucleoside 5'-diphosphate + [thioredoxin]-dithiol. Functionally, ribonucleoside-diphosphate reductase holoenzyme provides the precursors necessary for viral DNA synthesis. Allows virus growth in non-dividing cells. Catalyzes the biosynthesis of deoxyribonucleotides from the corresponding ribonucleotides. The polypeptide is Ribonucleoside-diphosphate reductase small chain (African swine fever virus (isolate Tick/Malawi/Lil 20-1/1983) (ASFV)).